Here is a 292-residue protein sequence, read N- to C-terminus: 4-hydroxybenzoate octaprenyltransferase (292 aa).

8 helical membrane passes run 20–40, 43–63, 94–114, 135–155, 160–180, 209–229, 234–254, and 266–286; these read IGIL…ADGM, PMIL…GCAI, LLIA…LNLL, FFAM…PMAF, GTVP…VIAY, VAGI…AGIL, IWFY…YGMI, and FLHN…DTLF.

This sequence belongs to the UbiA prenyltransferase family. Requires Mg(2+) as cofactor.

It localises to the cell inner membrane. The enzyme catalyses all-trans-octaprenyl diphosphate + 4-hydroxybenzoate = 4-hydroxy-3-(all-trans-octaprenyl)benzoate + diphosphate. Its pathway is cofactor biosynthesis; ubiquinone biosynthesis. Functionally, catalyzes the prenylation of para-hydroxybenzoate (PHB) with an all-trans polyprenyl group. Mediates the second step in the final reaction sequence of ubiquinone-8 (UQ-8) biosynthesis, which is the condensation of the polyisoprenoid side chain with PHB, generating the first membrane-bound Q intermediate 3-octaprenyl-4-hydroxybenzoate. The sequence is that of 4-hydroxybenzoate octaprenyltransferase from Nitrosomonas europaea (strain ATCC 19718 / CIP 103999 / KCTC 2705 / NBRC 14298).